A 219-amino-acid chain; its full sequence is MOB kinase activator-like 1 (219 aa).

Positions 79, 84, 161, and 166 each coordinate Zn(2+).

It belongs to the MOB1/phocein family. In terms of assembly, interacts with and activates trc and wts. Phosphorylated by wts/mats kinase complex. Activated by phosphorylation by Hippo (Hpo) kinase which increases its affinity and its ability to activate Warts (Wts) kinase. Ubiquitously expressed at low levels in developing tissues (at protein level).

The protein localises to the cytoplasm. The protein resides in the cytoskeleton. Its subcellular location is the microtubule organizing center. It is found in the centrosome. It localises to the nucleus. The protein localises to the cytosol. The protein resides in the cell membrane. Its function is as follows. Coactivator of Warts (Wts) kinase in the Hippo/SWH (Sav/Wts/Hpo)signaling pathway, a signaling pathway that plays a pivotal role in organ size control and tumor suppression by restricting proliferation and promoting apoptosis. The core of this pathway is composed of a kinase cascade wherein Hippo (Hpo), in complex with its regulatory protein Salvador (Sav), phosphorylates and activates Warts (Wts) in complex with its regulatory protein Mats, which in turn phosphorylates and inactivates the Yorkie (Yki)oncoprotein. The Hippo/SWH signaling pathway inhibits the activity of the transcriptional complex formed by Scalloped (sd) and Yki and the target genes of this pathway include cyclin-E (cycE), diap1 and bantam. Mats is essential for early development and is required for proper chromosomal segregation in developing embryos. This is MOB kinase activator-like 1 from Drosophila melanogaster (Fruit fly).